The following is a 201-amino-acid chain: Recombination protein RecR (201 aa).

Residues 59 to 74 (CEICGNMDTENICCIC) form a C4-type zinc finger. Positions 82–177 (SVIAVVETVA…KISRLASGIP (96 aa)) constitute a Toprim domain.

The protein belongs to the RecR family.

In terms of biological role, may play a role in DNA repair. It seems to be involved in an RecBC-independent recombinational process of DNA repair. It may act with RecF and RecO. The sequence is that of Recombination protein RecR from Rickettsia felis (strain ATCC VR-1525 / URRWXCal2) (Rickettsia azadi).